The primary structure comprises 624 residues: Pentatricopeptide repeat-containing protein At2g32630 (624 aa).

13 PPR repeats span residues 153-187 (FEKF…GLSI), 188-222 (DERS…GVKI), 223-257 (TVYS…GIKP), 258-292 (EAYT…GVVY), 293-327 (NKVT…GIES), 328-362 (DVHV…GLSP), 363-397 (SSYT…GVNI), 398-432 (TQVV…GFQA), 433-467 (DVFT…GVKL), 468-502 (STVS…GVQP), 503-537 (NAIT…GMDP), 538-572 (DSYT…GLDQ), and 573-607 (NSVT…GYTI).

Belongs to the PPR family. P subfamily.

The sequence is that of Pentatricopeptide repeat-containing protein At2g32630 from Arabidopsis thaliana (Mouse-ear cress).